Consider the following 314-residue polypeptide: Ribosomal protein uL3 glutamine methyltransferase (314 aa).

The protein belongs to the protein N5-glutamine methyltransferase family. PrmB subfamily.

It catalyses the reaction L-glutaminyl-[ribosomal protein uL3] + S-adenosyl-L-methionine = N(5)-methyl-L-glutaminyl-[ribosomal protein uL3] + S-adenosyl-L-homocysteine + H(+). Its function is as follows. Methylates large ribosomal subunit protein uL3 on a specific glutamine residue. In Francisella tularensis subsp. tularensis (strain SCHU S4 / Schu 4), this protein is Ribosomal protein uL3 glutamine methyltransferase.